We begin with the raw amino-acid sequence, 365 residues long: Alanine racemase (365 aa).

Catalysis depends on Lys-32, which acts as the Proton acceptor; specific for D-alanine. Position 32 is an N6-(pyridoxal phosphate)lysine (Lys-32). Position 128 (Arg-128) interacts with substrate. Catalysis depends on Tyr-257, which acts as the Proton acceptor; specific for L-alanine. Met-305 is a substrate binding site.

Belongs to the alanine racemase family. The cofactor is pyridoxal 5'-phosphate.

The catalysed reaction is L-alanine = D-alanine. It functions in the pathway amino-acid biosynthesis; D-alanine biosynthesis; D-alanine from L-alanine: step 1/1. Its function is as follows. Catalyzes the interconversion of L-alanine and D-alanine. May also act on other amino acids. The sequence is that of Alanine racemase (alr) from Francisella tularensis subsp. tularensis (strain WY96-3418).